A 2076-amino-acid polypeptide reads, in one-letter code: Protein Ycf2 (2076 aa).

ATP is bound at residue 1458-1465 (GSIGTGRS).

The protein belongs to the Ycf2 family.

It localises to the plastid. The protein localises to the chloroplast stroma. Probable ATPase of unknown function. Its presence in a non-photosynthetic plant (Epifagus virginiana) and experiments in tobacco indicate that it has an essential function which is probably not related to photosynthesis. The sequence is that of Protein Ycf2 from Acorus calamus (Sweet flag).